The sequence spans 98 residues: Integration host factor subunit alpha (98 aa).

A disordered region spans residues 49–72 (FGNFDLRDKNQRPGRNPKTGEDIP).

Belongs to the bacterial histone-like protein family. As to quaternary structure, heterodimer of an alpha and a beta chain.

Its function is as follows. This protein is one of the two subunits of integration host factor, a specific DNA-binding protein that functions in genetic recombination as well as in transcriptional and translational control. This Shewanella loihica (strain ATCC BAA-1088 / PV-4) protein is Integration host factor subunit alpha.